We begin with the raw amino-acid sequence, 257 residues long: Beta-fibrinogenase mucrofibrase-4 (257 aa).

An N-terminal signal peptide occupies residues 1-18 (MVLIRVLANLLILQLSYA). Residues 19–24 (QKSSEL) constitute a propeptide that is removed on maturation. The Peptidase S1 domain occupies 25–248 (VIGGDECNIN…HLDWIKGFIA (224 aa)). 6 disulfide bridges follow: Cys-31/Cys-162, Cys-49/Cys-65, Cys-97/Cys-255, Cys-141/Cys-209, Cys-173/Cys-188, and Cys-199/Cys-224. Residues His-64 and Asp-109 each act as charge relay system in the active site. Catalysis depends on Ser-203, which acts as the Charge relay system.

Belongs to the peptidase S1 family. Snake venom subfamily. In terms of assembly, monomer. As to expression, expressed by the venom gland.

It localises to the secreted. Its function is as follows. Snake venom serine protease with fibrinogenolytic activities. Cleaves beta-chain of fibrinogen (FGB) efficiently and shows relatively lower activity on alpha-chain. This is Beta-fibrinogenase mucrofibrase-4 from Protobothrops mucrosquamatus (Taiwan habu).